Consider the following 176-residue polypeptide: NAD(P)H-quinone oxidoreductase subunit 6, chloroplastic (176 aa).

5 consecutive transmembrane segments (helical) span residues 10 to 30 (FLLV…VLLP), 32 to 52 (PIYS…FYIL), 61 to 81 (AQLL…VMFM), 92 to 112 (LWTV…VSLI), and 152 to 172 (FFLP…GAIT).

Belongs to the complex I subunit 6 family. NDH is composed of at least 16 different subunits, 5 of which are encoded in the nucleus.

It localises to the plastid. The protein localises to the chloroplast thylakoid membrane. The catalysed reaction is a plastoquinone + NADH + (n+1) H(+)(in) = a plastoquinol + NAD(+) + n H(+)(out). It catalyses the reaction a plastoquinone + NADPH + (n+1) H(+)(in) = a plastoquinol + NADP(+) + n H(+)(out). In terms of biological role, NDH shuttles electrons from NAD(P)H:plastoquinone, via FMN and iron-sulfur (Fe-S) centers, to quinones in the photosynthetic chain and possibly in a chloroplast respiratory chain. The immediate electron acceptor for the enzyme in this species is believed to be plastoquinone. Couples the redox reaction to proton translocation, and thus conserves the redox energy in a proton gradient. The sequence is that of NAD(P)H-quinone oxidoreductase subunit 6, chloroplastic (ndhG) from Daucus carota (Wild carrot).